The sequence spans 445 residues: NAD-specific glutamate dehydrogenase (445 aa).

Lysine 124 is a catalytic residue.

Belongs to the Glu/Leu/Phe/Val dehydrogenases family. Homohexamer.

The protein localises to the cell surface. The catalysed reaction is L-glutamate + NAD(+) + H2O = 2-oxoglutarate + NH4(+) + NADH + H(+). Probably involved in degradation rather than biosynthesis of glutamate. The protein is NAD-specific glutamate dehydrogenase (gdh) of Porphyromonas gingivalis (strain ATCC 33277 / DSM 20709 / CIP 103683 / JCM 12257 / NCTC 11834 / 2561).